A 377-amino-acid polypeptide reads, in one-letter code: Probable G-protein coupled receptor 27 (377 aa).

Over 1 to 24 (MANASEPGGGGGGAEAAALGLRLA) the chain is Extracellular. N-linked (GlcNAc...) asparagine glycosylation is present at Asn-3. The helical transmembrane segment at 25–45 (TLSLLLCVSLAGNVLFALLIV) threads the bilayer. The Cytoplasmic segment spans residues 46–56 (RERSLHRAPYY). A helical membrane pass occupies residues 57 to 77 (LLLDLCLADGLRALACLPAVM). Residues 78 to 98 (LAARRAAAAAGTPPGALGCKL) lie on the Extracellular side of the membrane. A disulfide bond links Cys-96 and Cys-173. Residues 99–119 (LAFLAALFCFHAAFLLLGVGV) traverse the membrane as a helical segment. Over 120 to 140 (TRYLAIAHHRFYAERLAGWPC) the chain is Cytoplasmic. A helical membrane pass occupies residues 141–161 (AAMLVCAAWALALAAAFPPVL). Residues 162 to 183 (DGGGADDEDAPCALEQRPDGAP) are Extracellular-facing. The helical transmembrane segment at 184-204 (GALGFLLLLAAVVGATHLVYL) threads the bilayer. At 205–287 (RLLFFIHDRR…FKTEKRLCKM (83 aa)) the chain is on the cytoplasmic side. The chain crosses the membrane as a helical span at residues 288–308 (FYAITLLFLLLWGPYVVASYL). The Extracellular portion of the chain corresponds to 309-322 (RVLVRPGAVPQAYL). The helical transmembrane segment at 323–343 (TASVWLTFAQAGINPVVCFLF) threads the bilayer. Topologically, residues 344 to 377 (NRELRDCFRAQFPCCQSPQATQATLPCDLKGIGL) are cytoplasmic.

The protein belongs to the G-protein coupled receptor 1 family. In terms of tissue distribution, expressed as a 3.0 kb transcript, in whole brain, hippocampus, striatum, frontal cortex, thalamus, pons and hypothalamus. A lower molecular weight transcript was detected in all regions examined, except the hypothalamus.

Its subcellular location is the cell membrane. Orphan receptor. Possible candidate for amine-like G-protein coupled receptor. In Rattus norvegicus (Rat), this protein is Probable G-protein coupled receptor 27 (Gpr27).